The primary structure comprises 141 residues: Large ribosomal subunit protein uL11B/uL11C (141 aa).

This sequence belongs to the universal ribosomal protein uL11 family. As to quaternary structure, part of the ribosomal stalk of the 50S ribosomal subunit. Interacts with L10 and the large rRNA to form the base of the stalk. L10 forms an elongated spine to which L12 dimers bind in a sequential fashion forming a multimeric L10(L12)X complex. One or more lysine residues are methylated.

Its function is as follows. Forms part of the ribosomal stalk which helps the ribosome interact with GTP-bound translation factors. This is Large ribosomal subunit protein uL11B/uL11C from Bacillus cereus (strain ATCC 14579 / DSM 31 / CCUG 7414 / JCM 2152 / NBRC 15305 / NCIMB 9373 / NCTC 2599 / NRRL B-3711).